We begin with the raw amino-acid sequence, 386 residues long: Succinate--CoA ligase [ADP-forming] subunit beta (386 aa).

ATP is bound by residues lysine 46, 53-55, glutamate 99, glutamine 102, and glutamate 107; that span reads GRG. The Mg(2+) site is built by asparagine 199 and aspartate 213. Residues asparagine 264 and 321–323 contribute to the substrate site; that span reads GIV.

The protein belongs to the succinate/malate CoA ligase beta subunit family. As to quaternary structure, heterotetramer of two alpha and two beta subunits. Requires Mg(2+) as cofactor.

It carries out the reaction succinate + ATP + CoA = succinyl-CoA + ADP + phosphate. It catalyses the reaction GTP + succinate + CoA = succinyl-CoA + GDP + phosphate. Its pathway is carbohydrate metabolism; tricarboxylic acid cycle; succinate from succinyl-CoA (ligase route): step 1/1. Functionally, succinyl-CoA synthetase functions in the citric acid cycle (TCA), coupling the hydrolysis of succinyl-CoA to the synthesis of either ATP or GTP and thus represents the only step of substrate-level phosphorylation in the TCA. The beta subunit provides nucleotide specificity of the enzyme and binds the substrate succinate, while the binding sites for coenzyme A and phosphate are found in the alpha subunit. The protein is Succinate--CoA ligase [ADP-forming] subunit beta of Ruthia magnifica subsp. Calyptogena magnifica.